The following is a 549-amino-acid chain: Cytoplasmic trehalase (549 aa).

Substrate-binding positions include R168, 175-176 (WD), N212, 221-223 (RSQ), 292-294 (RDE), and G324. Residues D326 and E509 each act as proton donor/acceptor in the active site. E525 is a substrate binding site.

The protein belongs to the glycosyl hydrolase 37 family. Monomer.

The protein localises to the cytoplasm. The catalysed reaction is alpha,alpha-trehalose + H2O = alpha-D-glucose + beta-D-glucose. It functions in the pathway glycan degradation; trehalose degradation; D-glucose from alpha,alpha-trehalose: step 1/1. Hydrolyzes trehalose to glucose. Could be involved, in cells returning to low osmolarity conditions, in the utilization of the accumulated cytoplasmic trehalose, which was synthesized in response to high osmolarity. This Salmonella schwarzengrund (strain CVM19633) protein is Cytoplasmic trehalase.